The following is a 432-amino-acid chain: Trigger factor (432 aa).

A PPIase FKBP-type domain is found at aspartate 161–proline 246.

The protein belongs to the FKBP-type PPIase family. Tig subfamily.

It is found in the cytoplasm. The enzyme catalyses [protein]-peptidylproline (omega=180) = [protein]-peptidylproline (omega=0). Its function is as follows. Involved in protein export. Acts as a chaperone by maintaining the newly synthesized protein in an open conformation. Functions as a peptidyl-prolyl cis-trans isomerase. This Haemophilus influenzae (strain PittEE) protein is Trigger factor.